Consider the following 679-residue polypeptide: MSKNLLIELGLEELPAYVVTPSEKQLGERLATFLTENRLSFEDIQTFSTPRRLAVRVSGLADQQTDLTEDFKGPAKKIALDADGNFSKAAQGFVRGKGLTTDAIEFREVKGEEYVYVTKHEAGKPAKEVLLGVTEVLSAMTFPVSMHWANNSFEYIRPVHTLTVLLNDEALELDFLDIHSGRVSRGHRFLGTETTITSADSYEADLRSQCVIVDAKERQEMIVEQIKTLEVEQGVQVDIDEDLLNEVLNLVEFPTAFMGNFEAKYLDVPEEVLVTSMKNHQRYFVVRDQAGHLMPNFVSVRNGNDQAIENVIKGNEKVLVARLEDGEFFWREDQKLQIADLVAKLTNVTFHEKIGSLAEHMDRTRVIAASLAKEANLSAEEVTAVDRAAQIYKFDLLTGMVGEFDELQGIMGEKYALLAGEDAAVATAIREHYLPDAAGGALPETKVGVVLALADKLDTLLSFFSVGLIPSGSNDPYALRRATQGIVRILDHFGWRIPMDKLVDSLYDLSFDSLTYTNKADVMNFIRARVDKMMGKAAPKDIREAILASSTFVVPEMLAVAEALVKASHTENYKPAVESLSRAFNLAEKADASVQVDPSLFENEQENTLFAAIQGLTLAGSAAQQLEQVFALSPVINDFFDNTMVMAEDQALKNNRVAILSDLVSKAKTIAAFNQLNTK.

Belongs to the class-II aminoacyl-tRNA synthetase family. In terms of assembly, tetramer of two alpha and two beta subunits.

It localises to the cytoplasm. The catalysed reaction is tRNA(Gly) + glycine + ATP = glycyl-tRNA(Gly) + AMP + diphosphate. The chain is Glycine--tRNA ligase beta subunit from Streptococcus pyogenes serotype M12 (strain MGAS9429).